We begin with the raw amino-acid sequence, 758 residues long: MAVHRGSARAAPASDKVQKNKPAQTSGLEQGSRMARIFGFEWADLSSWQSVVTLLNRPTDPANLAVFRFLFAFLMLLDIPQERGLSSLDRKYLDGLDVCRFPLLDALRPLPLDWMYLVYTIMFLGALGMMLGLWYRLSCMLFLLPYWYVFLLDKTSWNNHSYLYGLLAFQLTFMDANHYWSVDGLLSAQKKNAHVPLWNYTVLRGQIFIVYFIAGVKKLDADWVEGYSMEHLSRHWLFSPFKLVLSEELTSLLVVHWCGLLLDLSAGFLLFFDASRPIGLVFVSYFHCMNSQLFSIGMFPYVMLASSPLFCSAEWPRKLVARCPKRLQELLPAKAAPRPSASCVYKRARAKAGQKPGLRHHLGTVFTLLYLLEQLFLPYSHFLTQGYNNWTNGLYGYSWDMMVHSRSHQHVKITYRDGLTGELGYLNPGVFTQSRRWKDHADMLKQYATCLSLLLPKYNVTEPQIYFDIWVSINDRFQQRLFDPRVDIVQAVWSPFRRTPWVQPLLMDLSPWRTKLQDIKSSLDNHTEVVFIADFPGLHLENFVSEDLGNTSIQLLQGEVTVELVAEQKNQTLREGEKMQLPAGEYHKVYTVSSSPSCYMYIYVNTTEVALEQDLAYLQELKEKVENGSETGPLPPELQPLLEGEVKGGPEPTPLVQTFLRRQRKLQEIERRRNSPLHERFLRFVLRKLYVFRRSFLMTRISLRNLLFGRPSLEQLAQEVTYANLRPFEPVDESSASNTDSSDPHPSEPDSEHVHSEL.

The tract at residues 1-29 (MAVHRGSARAAPASDKVQKNKPAQTSGLE) is disordered. Position 2 is an N-acetylalanine (Ala2). Topologically, residues 2-60 (AVHRGSARAAPASDKVQKNKPAQTSGLEQGSRMARIFGFEWADLSSWQSVVTLLNRPTD) are cytoplasmic. A helical membrane pass occupies residues 61-81 (PANLAVFRFLFAFLMLLDIPQ). Residues 82 to 113 (ERGLSSLDRKYLDGLDVCRFPLLDALRPLPLD) are Lumenal-facing. A disulfide bridge links Cys99 with Cys450. Residues 114–134 (WMYLVYTIMFLGALGMMLGLW) traverse the membrane as a helical segment. At 135-136 (YR) the chain is on the cytoplasmic side. A helical transmembrane segment spans residues 137-157 (LSCMLFLLPYWYVFLLDKTSW). Over 158–292 (NNHSYLYGLL…VSYFHCMNSQ (135 aa)) the chain is Lumenal. The chain crosses the membrane as a helical span at residues 293 to 313 (LFSIGMFPYVMLASSPLFCSA). Topologically, residues 314 to 361 (EWPRKLVARCPKRLQELLPAKAAPRPSASCVYKRARAKAGQKPGLRHH) are cytoplasmic. A helical membrane pass occupies residues 362 to 382 (LGTVFTLLYLLEQLFLPYSHF). Topologically, residues 383-758 (LTQGYNNWTN…PDSEHVHSEL (376 aa)) are lumenal. Residues 727 to 758 (PFEPVDESSASNTDSSDPHPSEPDSEHVHSEL) are disordered. Over residues 742-758 (SDPHPSEPDSEHVHSEL) the composition is skewed to basic and acidic residues.

The protein belongs to the vitamin K-dependent gamma-carboxylase family. In terms of assembly, monomer. Interacts with CALU.

It localises to the endoplasmic reticulum membrane. It carries out the reaction 4-carboxy-L-glutamyl-[protein] + 2,3-epoxyphylloquinone + H2O + H(+) = phylloquinol + L-glutamyl-[protein] + CO2 + O2. Functionally, mediates the vitamin K-dependent carboxylation of glutamate residues to calcium-binding gamma-carboxyglutamate (Gla) residues with the concomitant conversion of the reduced hydroquinone form of vitamin K to vitamin K epoxide. Catalyzes gamma-carboxylation of various proteins, such as blood coagulation factors (F2, F7, F9 and F10), osteocalcin (BGLAP) or matrix Gla protein (MGP). The protein is Vitamin K-dependent gamma-carboxylase (Ggcx) of Rattus norvegicus (Rat).